The primary structure comprises 148 residues: Protein F15 (148 aa).

Belongs to the poxviridae F15 protein family.

The polypeptide is Protein F15 (Fowlpox virus (strain NVSL) (FPV)).